The sequence spans 337 residues: uncharacterized protein (337 aa).

The region spanning 22–76 (PFRLLSLPTLALKNVLLHIDFIDLLELSLASKKCEIYMKTCCLKIDSLHFHFRRI) is the F-box domain.

This is an uncharacterized protein from Caenorhabditis elegans.